A 272-amino-acid polypeptide reads, in one-letter code: NH(3)-dependent NAD(+) synthetase (272 aa).

45 to 52 (GISGGQDS) is an ATP binding site. Asp-51 contributes to the Mg(2+) binding site. Residue Arg-138 coordinates deamido-NAD(+). ATP is bound at residue Thr-158. Glu-163 lines the Mg(2+) pocket. 2 residues coordinate deamido-NAD(+): Lys-171 and Asp-178. Residues Lys-187 and Thr-209 each coordinate ATP. Position 258–259 (258–259 (HK)) interacts with deamido-NAD(+).

The protein belongs to the NAD synthetase family. Homodimer.

The enzyme catalyses deamido-NAD(+) + NH4(+) + ATP = AMP + diphosphate + NAD(+) + H(+). Its pathway is cofactor biosynthesis; NAD(+) biosynthesis; NAD(+) from deamido-NAD(+) (ammonia route): step 1/1. Its function is as follows. Catalyzes the ATP-dependent amidation of deamido-NAD to form NAD. Uses ammonia as a nitrogen source. In Bacillus thuringiensis subsp. konkukian (strain 97-27), this protein is NH(3)-dependent NAD(+) synthetase.